The primary structure comprises 309 residues: Homoserine kinase (309 aa).

Position 91 to 101 (91 to 101) interacts with ATP; that stretch reads PIGSGLGSSAC.

Belongs to the GHMP kinase family. Homoserine kinase subfamily.

It localises to the cytoplasm. The catalysed reaction is L-homoserine + ATP = O-phospho-L-homoserine + ADP + H(+). It functions in the pathway amino-acid biosynthesis; L-threonine biosynthesis; L-threonine from L-aspartate: step 4/5. In terms of biological role, catalyzes the ATP-dependent phosphorylation of L-homoserine to L-homoserine phosphate. This is Homoserine kinase from Salmonella agona (strain SL483).